Reading from the N-terminus, the 65-residue chain is Large ribosomal subunit protein bL35 (65 aa).

This sequence belongs to the bacterial ribosomal protein bL35 family.

In Synechococcus sp. (strain WH7803), this protein is Large ribosomal subunit protein bL35.